A 335-amino-acid chain; its full sequence is Anthranilate phosphoribosyltransferase (335 aa).

Residues Gly79, 82-83 (GD), Ser87, 89-92 (NIST), 107-115 (KHGNRSITS), and Ser119 contribute to the 5-phospho-alpha-D-ribose 1-diphosphate site. Residue Gly79 participates in anthranilate binding. Ser91 provides a ligand contact to Mg(2+). Residue Asn110 participates in anthranilate binding. Arg165 serves as a coordination point for anthranilate. Mg(2+) is bound by residues Asp224 and Glu225.

This sequence belongs to the anthranilate phosphoribosyltransferase family. In terms of assembly, homodimer. Mg(2+) serves as cofactor.

It catalyses the reaction N-(5-phospho-beta-D-ribosyl)anthranilate + diphosphate = 5-phospho-alpha-D-ribose 1-diphosphate + anthranilate. It functions in the pathway amino-acid biosynthesis; L-tryptophan biosynthesis; L-tryptophan from chorismate: step 2/5. Functionally, catalyzes the transfer of the phosphoribosyl group of 5-phosphorylribose-1-pyrophosphate (PRPP) to anthranilate to yield N-(5'-phosphoribosyl)-anthranilate (PRA). The protein is Anthranilate phosphoribosyltransferase of Lactococcus lactis subsp. cremoris (strain SK11).